The sequence spans 172 residues: Putative acetyltransferase YvoF (172 aa).

It belongs to the transferase hexapeptide repeat family.

In Bacillus subtilis (strain 168), this protein is Putative acetyltransferase YvoF (yvoF).